A 368-amino-acid chain; its full sequence is 2-aminoethylphosphonate--pyruvate transaminase (368 aa).

K192 bears the N6-(pyridoxal phosphate)lysine mark.

This sequence belongs to the class-V pyridoxal-phosphate-dependent aminotransferase family. PhnW subfamily. As to quaternary structure, homodimer. The cofactor is pyridoxal 5'-phosphate.

The enzyme catalyses (2-aminoethyl)phosphonate + pyruvate = phosphonoacetaldehyde + L-alanine. Involved in phosphonate degradation. The sequence is that of 2-aminoethylphosphonate--pyruvate transaminase from Pseudomonas entomophila (strain L48).